The primary structure comprises 343 residues: Heat-inducible transcription repressor HrcA (343 aa).

The protein belongs to the HrcA family.

In terms of biological role, negative regulator of class I heat shock genes (grpE-dnaK-dnaJ and groELS operons). Prevents heat-shock induction of these operons. This Thermoanaerobacter sp. (strain X514) protein is Heat-inducible transcription repressor HrcA.